A 133-amino-acid chain; its full sequence is Ribosome-binding factor A (133 aa).

This sequence belongs to the RbfA family. In terms of assembly, monomer. Binds 30S ribosomal subunits, but not 50S ribosomal subunits or 70S ribosomes.

The protein resides in the cytoplasm. In terms of biological role, one of several proteins that assist in the late maturation steps of the functional core of the 30S ribosomal subunit. Associates with free 30S ribosomal subunits (but not with 30S subunits that are part of 70S ribosomes or polysomes). Required for efficient processing of 16S rRNA. May interact with the 5'-terminal helix region of 16S rRNA. The sequence is that of Ribosome-binding factor A from Salmonella schwarzengrund (strain CVM19633).